Here is a 325-residue protein sequence, read N- to C-terminus: Lipoyl synthase (325 aa).

7 residues coordinate [4Fe-4S] cluster: cysteine 72, cysteine 77, cysteine 83, cysteine 98, cysteine 102, cysteine 105, and serine 312. Residues 84-301 (FAGGTATFMI…AEEGERMGFK (218 aa)) form the Radical SAM core domain.

It belongs to the radical SAM superfamily. Lipoyl synthase family. It depends on [4Fe-4S] cluster as a cofactor.

The protein localises to the cytoplasm. The enzyme catalyses [[Fe-S] cluster scaffold protein carrying a second [4Fe-4S](2+) cluster] + N(6)-octanoyl-L-lysyl-[protein] + 2 oxidized [2Fe-2S]-[ferredoxin] + 2 S-adenosyl-L-methionine + 4 H(+) = [[Fe-S] cluster scaffold protein] + N(6)-[(R)-dihydrolipoyl]-L-lysyl-[protein] + 4 Fe(3+) + 2 hydrogen sulfide + 2 5'-deoxyadenosine + 2 L-methionine + 2 reduced [2Fe-2S]-[ferredoxin]. The protein operates within protein modification; protein lipoylation via endogenous pathway; protein N(6)-(lipoyl)lysine from octanoyl-[acyl-carrier-protein]: step 2/2. In terms of biological role, catalyzes the radical-mediated insertion of two sulfur atoms into the C-6 and C-8 positions of the octanoyl moiety bound to the lipoyl domains of lipoate-dependent enzymes, thereby converting the octanoylated domains into lipoylated derivatives. This chain is Lipoyl synthase, found in Azotobacter vinelandii (strain DJ / ATCC BAA-1303).